A 434-amino-acid polypeptide reads, in one-letter code: Beta-glucuronosyltransferase GlcAT14B (434 aa).

Topologically, residues Met1–Lys21 are cytoplasmic. A signal-anchor for type II membrane protein membrane pass occupies residues Trp22–Leu42. Over Ala43 to Arg434 the chain is Lumenal. N-linked (GlcNAc...) asparagine glycans are attached at residues Asn138, Asn187, Asn316, and Asn392.

Belongs to the glycosyltransferase 14 family.

It localises to the golgi apparatus membrane. Its function is as follows. Beta-glucuronosyltransferase involved in the biosynthesis of type II arabinogalactan (AG). Modifies both the beta-1,6-linked galactan and beta-1,3-linked galactan present in type II AG. This chain is Beta-glucuronosyltransferase GlcAT14B, found in Arabidopsis thaliana (Mouse-ear cress).